A 92-amino-acid polypeptide reads, in one-letter code: Small ribosomal subunit protein bS21 (92 aa).

The segment at 37–92 (QREGTFREMKRRNHYEKPSEKKARQKAEAIRRARKLARKRAQREGLIAKRGGTTRR) is disordered. A compositionally biased stretch (basic and acidic residues) spans 51 to 67 (YEKPSEKKARQKAEAIR). Residues 68 to 77 (RARKLARKRA) are compositionally biased toward basic residues.

It belongs to the bacterial ribosomal protein bS21 family.

In Maricaulis maris (strain MCS10) (Caulobacter maris), this protein is Small ribosomal subunit protein bS21.